A 508-amino-acid chain; its full sequence is Probable zinc metalloprotease MCYG_04217 (508 aa).

Residue Asn111 is glycosylated (N-linked (GlcNAc...) asparagine). 3 residues coordinate Zn(2+): His182, Asp202, and Glu238. N-linked (GlcNAc...) asparagine glycosylation occurs at Asn253. Asp265 provides a ligand contact to Zn(2+). Residues 422–508 (MPRNVRVDTS…ERGVAVLPFP (87 aa)) enclose the Fibronectin type-III domain. Asn435 carries an N-linked (GlcNAc...) asparagine glycan.

The protein belongs to the peptidase M28 family. M28B subfamily. Zn(2+) serves as cofactor.

Its subcellular location is the secreted. The sequence is that of Probable zinc metalloprotease MCYG_04217 from Arthroderma otae (strain ATCC MYA-4605 / CBS 113480) (Microsporum canis).